Here is a 141-residue protein sequence, read N- to C-terminus: Large ribosomal subunit protein uL11 (141 aa).

The protein belongs to the universal ribosomal protein uL11 family. Part of the ribosomal stalk of the 50S ribosomal subunit. Interacts with L10 and the large rRNA to form the base of the stalk. L10 forms an elongated spine to which L12 dimers bind in a sequential fashion forming a multimeric L10(L12)X complex. Post-translationally, one or more lysine residues are methylated.

Forms part of the ribosomal stalk which helps the ribosome interact with GTP-bound translation factors. This is Large ribosomal subunit protein uL11 from Leptospira biflexa serovar Patoc (strain Patoc 1 / Ames).